The sequence spans 409 residues: Terpredoxin reductase (409 aa).

An FAD-binding site is contributed by 7–38 (TTVIVGAGHAGTAAAFFLREFGYHGRVLLLSA). Residue 151 to 159 (GGGFIGLEI) participates in NAD(+) binding.

The cofactor is FAD.

Functionally, the oxidation of alpha-terpineol by cytochrome p450-TERP requires the participation of a flavoprotein, terpredoxin reductase, and an iron-sulfur protein, terpredoxin, to mediate the transfer of electrons from NADH to P450 for oxygen activation. This chain is Terpredoxin reductase (terPA), found in Pseudomonas sp.